A 326-amino-acid polypeptide reads, in one-letter code: N-(2-amino-2-carboxyethyl)-L-glutamate synthase (326 aa).

Lys-47 bears the N6-(pyridoxal phosphate)lysine mark. Pyridoxal 5'-phosphate is bound by residues Asn-77, 185–189, and Ser-272; that span reads STTGS.

The protein belongs to the cysteine synthase/cystathionine beta-synthase family. SbnA subfamily. As to quaternary structure, homodimer. Pyridoxal 5'-phosphate is required as a cofactor.

It catalyses the reaction O-phospho-L-serine + L-glutamate = N-[(2S)-2-amino-2-carboxyethyl]-L-glutamate + phosphate + H(+). The protein operates within siderophore biosynthesis. Its function is as follows. Catalyzes the synthesis of N-((2S)-2-amino-2-carboxyethyl)-L-glutamate (ACEGA) from O-phospho-L-serine and L-glutamate. Involved in the biosynthesis of L-2,3-diaminopropionic acid (L-Dap), a precursor of staphyloferrin B and antibiotics. This chain is N-(2-amino-2-carboxyethyl)-L-glutamate synthase (sbnA), found in Staphylococcus aureus (strain N315).